The following is a 147-amino-acid chain: NAD(P)H-quinone oxidoreductase subunit N (147 aa).

Belongs to the complex I NdhN subunit family. In terms of assembly, NDH-1 can be composed of about 15 different subunits; different subcomplexes with different compositions have been identified which probably have different functions.

It localises to the cellular thylakoid membrane. The catalysed reaction is a plastoquinone + NADH + (n+1) H(+)(in) = a plastoquinol + NAD(+) + n H(+)(out). It carries out the reaction a plastoquinone + NADPH + (n+1) H(+)(in) = a plastoquinol + NADP(+) + n H(+)(out). NDH-1 shuttles electrons from an unknown electron donor, via FMN and iron-sulfur (Fe-S) centers, to quinones in the respiratory and/or the photosynthetic chain. The immediate electron acceptor for the enzyme in this species is believed to be plastoquinone. Couples the redox reaction to proton translocation, and thus conserves the redox energy in a proton gradient. Cyanobacterial NDH-1 also plays a role in inorganic carbon-concentration. This Synechococcus sp. (strain JA-3-3Ab) (Cyanobacteria bacterium Yellowstone A-Prime) protein is NAD(P)H-quinone oxidoreductase subunit N.